We begin with the raw amino-acid sequence, 330 residues long: DNA-directed RNA polymerase subunit alpha (330 aa).

Residues 1 to 236 (MQGSVTEFLK…EQLDAFVDLR (236 aa)) form an alpha N-terminal domain (alpha-NTD) region. Positions 250-330 (FDPILLRPVD…NWPPASIAED (81 aa)) are alpha C-terminal domain (alpha-CTD).

Belongs to the RNA polymerase alpha chain family. In terms of assembly, homodimer. The RNAP catalytic core consists of 2 alpha, 1 beta, 1 beta' and 1 omega subunit. When a sigma factor is associated with the core the holoenzyme is formed, which can initiate transcription.

It carries out the reaction RNA(n) + a ribonucleoside 5'-triphosphate = RNA(n+1) + diphosphate. Functionally, DNA-dependent RNA polymerase catalyzes the transcription of DNA into RNA using the four ribonucleoside triphosphates as substrates. The polypeptide is DNA-directed RNA polymerase subunit alpha (Vibrio campbellii (strain ATCC BAA-1116)).